The primary structure comprises 579 residues: Folliculin (579 aa).

Residues 32-82 are disordered; it reads GAGSGDGAGRGEPADEEEGGIQMSSRIRAHSPAEGASAESSSPGPKKSDMC. S62 and S73 each carry phosphoserine. A compositionally biased stretch (low complexity) spans 63–76; sequence PAEGASAESSSPGP. The region spanning 86 to 242 is the uDENN FLCN/SMCR8-type domain; that stretch reads RSLAAGHPGY…RNGNAARSLT (157 aa). The stretch at 285-309 forms a coiled coil; sequence QMEQLAELEEESESWDNSEAEEEEK. The span at 294-308 shows a compositional bias: acidic residues; sequence EESESWDNSEAEEEE. Residues 294-321 form a disordered region; the sequence is EESESWDNSEAEEEEKGPALPEGAEGRE. 5 positions are modified to phosphoserine: S302, S406, S537, S542, and S571. The cDENN FLCN/SMCR8-type domain occupies 339–491; that stretch reads QPRKLSVFKS…ILNKMEAALT (153 aa). The dDENN FLCN/SMCR8-type domain maps to 493–558; that stretch reads QNLSVDVVDQ…LLKFWMTGLS (66 aa).

The protein belongs to the folliculin family. In terms of assembly, interacts (via C-terminus) with FNIP1 or FNIP2 (via C-terminus). Component of the lysosomal folliculin complex (LFC), composed of FLCN, FNIP1 (or FNIP2), RagA/RRAGA or RagB/RRAGB GDP-bound, RagC/RRAGC or RagD/RRAGD GTP-bound, and Ragulator. Interaction with FNIP1 or FNIP2 mediates indirect interaction with the PRKAA1, PRKAB1 and PRKAG1 subunits of 5'-AMP-activated protein kinase (AMPK). Interacts with HSP90AA1 in the presence of FNIP1. Interacts with HSP70, STUB1, CDC37, AHSA1, CCT2, STIP1, PTGES3 and PPP5C. Interacts with GABARAP; interaction takes place in the presence of FNIP1 and/or FNIP2. Interacts with RILP; the interaction is direct and promotes association between RILP and RAB34. Interacts with KIF3A and KIF3B. Interacts with lactate dehydrogenase LDHA, but not LDHB; the interaction is direct, may preferentially bind LDHA dimers rather than tetramers, and regulates LDHA activity, acting as an uncompetitive inhibitor. Phosphorylation by ULK1 modulates the interaction with GABARAP and is required to regulate autophagy.

It localises to the lysosome membrane. The protein resides in the cytoplasm. Its subcellular location is the cytosol. It is found in the cell projection. The protein localises to the cilium. It localises to the cytoskeleton. The protein resides in the microtubule organizing center. Its subcellular location is the centrosome. It is found in the spindle. The protein localises to the nucleus. GTPase-activating activity is inhibited in the folliculin complex (LFC), which stabilizes the GDP-bound state of RagA/RRAGA (or RagB/RRAGB), because Arg-164 is located far from the RagC/RRAGC or RagD/RRAGD nucleotide pocket. Disassembly of the LFC complex upon amino acid restimulation liberates the GTPase-activating activity. Multi-functional protein, involved in both the cellular response to amino acid availability and in the regulation of glycolysis. GTPase-activating protein that plays a key role in the cellular response to amino acid availability through regulation of the non-canonical mTORC1 signaling cascade controlling the MiT/TFE factors TFEB and TFE3. Activates mTORC1 by acting as a GTPase-activating protein: specifically stimulates GTP hydrolysis by RagC/RRAGC or RagD/RRAGD, promoting the conversion to the GDP-bound state of RagC/RRAGC or RagD/RRAGD, and thereby activating the kinase activity of mTORC1. The GTPase-activating activity is inhibited during starvation and activated in presence of nutrients. Acts as a key component for non-canonical mTORC1-dependent control of the MiT/TFE factors TFEB and TFE3, while it is not involved in mTORC1-dependent phosphorylation of canonical RPS6KB1/S6K1 and EIF4EBP1/4E-BP1. In low-amino acid conditions, the lysosomal folliculin complex (LFC) is formed on the membrane of lysosomes, which inhibits the GTPase-activating activity of FLCN, inactivates mTORC1 and maximizes nuclear translocation of TFEB and TFE3. Upon amino acid restimulation, RagA/RRAGA (or RagB/RRAGB) nucleotide exchange promotes disassembly of the LFC complex and liberates the GTPase-activating activity of FLCN, leading to activation of mTORC1 and subsequent cytoplasmic retention of TFEB and TFE3. Indirectly acts as a positive regulator of Wnt signaling by promoting mTOR-dependent cytoplasmic retention of MiT/TFE factor TFE3. Required for the exit of hematopoietic stem cell from pluripotency by promoting mTOR-dependent cytoplasmic retention of TFE3, thereby increasing Wnt signaling. Involved in the control of embryonic stem cells differentiation; together with LAMTOR1 it is necessary to recruit and activate RagC/RRAGC and RagD/RRAGD at the lysosomes, and to induce exit of embryonic stem cells from pluripotency via non-canonical, mTOR-independent TFE3 inactivation. Acts as an inhibitor of browning of adipose tissue by regulating mTOR-dependent cytoplasmic retention of TFE3. In response to flow stress, regulates STK11/LKB1 accumulation and mTORC1 activation through primary cilia: may act by recruiting STK11/LKB1 to primary cilia for activation of AMPK resided at basal bodies, causing mTORC1 down-regulation. Together with FNIP1 and/or FNIP2, regulates autophagy: following phosphorylation by ULK1, interacts with GABARAP and promotes autophagy. Required for starvation-induced perinuclear clustering of lysosomes by promoting association of RILP with its effector RAB34. Regulates glycolysis by binding to lactate dehydrogenase LDHA, acting as an uncompetitive inhibitor. The chain is Folliculin from Bos taurus (Bovine).